Here is a 134-residue protein sequence, read N- to C-terminus: Small ribosomal subunit protein uS11 (134 aa).

The segment at 1–22 (MAQKTRATAARKPRRKVNKNVT) is disordered. A compositionally biased stretch (basic residues) spans 9 to 18 (AARKPRRKVN).

Belongs to the universal ribosomal protein uS11 family. As to quaternary structure, part of the 30S ribosomal subunit. Interacts with proteins S7 and S18. Binds to IF-3.

Functionally, located on the platform of the 30S subunit, it bridges several disparate RNA helices of the 16S rRNA. Forms part of the Shine-Dalgarno cleft in the 70S ribosome. In Kocuria rhizophila (strain ATCC 9341 / DSM 348 / NBRC 103217 / DC2201), this protein is Small ribosomal subunit protein uS11.